The following is a 951-amino-acid chain: Leucine-rich repeat-containing G-protein coupled receptor 4 (951 aa).

An N-terminal signal peptide occupies residues 1 to 24 (MPGPLRLLCFFALGLLGSAGPSGA). The LRRNT domain maps to 25–57 (APPLCAAPCSCDGDRRVDCSGKGLTAVPEGLSA). The Extracellular portion of the chain corresponds to 25–544 (APPLCAAPCS…LLGSWMIRLT (520 aa)). 2 disulfides stabilise this stretch: cysteine 29-cysteine 35 and cysteine 33-cysteine 43. 10 LRR repeats span residues 58–79 (FTQA…AFKS), 82–103 (FLEE…ALSG), 106–127 (ELKV…AIHG), 130–151 (ALQS…SFEG), 154–177 (QLRH…SNLP), 178–199 (TLQA…AFTN), 202–223 (SLVV…CFDG), 226–247 (NLET…IKAL), 249–270 (SLKE…AFGG), and 273–294 (LLRT…AFHN). Asparagine 68 carries an N-linked (GlcNAc...) asparagine glycan. N-linked (GlcNAc...) asparagine glycans are attached at residues asparagine 188 and asparagine 199. Asparagine 294 and asparagine 314 each carry an N-linked (GlcNAc...) asparagine glycan. 5 LRR repeats span residues 320–341 (HLES…LCQN), 344–365 (MLRT…NGCR), 366–387 (ALEE…TFQG), 390–411 (SLRI…AFAK), and 414–435 (TITN…GLNG). Residues cysteine 339 and cysteine 364 are joined by a disulfide bond. 2 cysteine pairs are disulfide-bonded: cysteine 470/cysteine 522 and cysteine 471/cysteine 476. N-linked (GlcNAc...) asparagine glycosylation occurs at asparagine 505. Residues 545–565 (VWFIFLVALLFNLLVILTVFA) form a helical membrane-spanning segment. At 566–575 (SCSSLPASKL) the chain is on the cytoplasmic side. Residues 576–596 (FIGLISVSNLLMGIYTGILTF) traverse the membrane as a helical segment. At 597-619 (LDAVSWGRFAEFGIWWETGSGCK) the chain is on the extracellular side. Cysteines 618 and 693 form a disulfide. The chain crosses the membrane as a helical span at residues 620-640 (VAGSLAVFSSESAVFLLTLAA). Topologically, residues 641–661 (VERSVFAKDLMKHGKSSHLRQ) are cytoplasmic. A helical membrane pass occupies residues 662–682 (FQVAALLALLGAAVAGCFPLF). At 683-703 (HGGQYSASPLCLPFPTGETPS) the chain is on the extracellular side. The helical transmembrane segment at 704–724 (LGFTVTLVLLNSLAFLLMAII) threads the bilayer. The Cytoplasmic portion of the chain corresponds to 725–756 (YTKLYCNLEKEDLSENSQSSVIKHVAWLIFTN). Residues 757 to 777 (CIFFCPVAFFSFAPLITAISI) traverse the membrane as a helical segment. Over 778 to 783 (SPEIMK) the chain is Extracellular. The helical transmembrane segment at 784 to 804 (SVTLIFFPLPACLNPVLYVFF) threads the bilayer. Residues 805–951 (NPKFKEDWKL…YAYNLQRVRD (147 aa)) lie on the Cytoplasmic side of the membrane. A Phosphoserine modification is found at serine 920.

This sequence belongs to the G-protein coupled receptor 1 family.

It localises to the cell membrane. Receptor for R-spondins that potentiates the canonical Wnt signaling pathway and is involved in the formation of various organs. Upon binding to R-spondins (RSPO1, RSPO2, RSPO3 or RSPO4), associates with phosphorylated LRP6 and frizzled receptors that are activated by extracellular Wnt receptors, triggering the canonical Wnt signaling pathway to increase expression of target genes. In contrast to classical G-protein coupled receptors, does not activate heterotrimeric G-proteins to transduce the signal. Its function as activator of the Wnt signaling pathway is required for the development of various organs, including liver, kidney, intestine, bone, reproductive tract and eye. May also act as a receptor for norrin (NDP), such results however require additional confirmation in vivo. Required during spermatogenesis to activate the Wnt signaling pathway in peritubular myoid cells. Required for the maintenance of intestinal stem cells and Paneth cell differentiation in postnatal intestinal crypts. Acts as a regulator of bone formation and remodeling. Involved in kidney development; required for maintaining the ureteric bud in an undifferentiated state. Involved in the development of the anterior segment of the eye. Required during erythropoiesis. Also acts as a negative regulator of innate immunity by inhibiting TLR2/TLR4 associated pattern-recognition and pro-inflammatory cytokine production. Plays an important role in regulating the circadian rhythms of plasma lipids, partially through regulating the rhythmic expression of MTTP. Required for proper development of GnRH neurons (gonadotropin-releasing hormone expressing neurons) that control the release of reproductive hormones from the pituitary gland. This chain is Leucine-rich repeat-containing G-protein coupled receptor 4 (Lgr4), found in Rattus norvegicus (Rat).